A 30-amino-acid polypeptide reads, in one-letter code: Sillucin (30 aa).

Intrachain disulfides connect Cys2-Cys7, Cys12-Cys24, Cys13-Cys30, and Cys14-Cys21.

It is found in the secreted. Functionally, sillucin is an antimicrobial agent produced by the thermophilic fungus Rhizomucor pusillus in liquid culture; it is effective against Gram-positive bacteria at the level of RNA metabolism. The chain is Sillucin from Rhizomucor pusillus.